We begin with the raw amino-acid sequence, 546 residues long: Choline oxidase (546 aa).

Residues 23–24, glutamate 44, tryptophan 71, 90–92, 96–103, alanine 232, and tyrosine 465 each bind FAD; these read SA, AKV, and CSSHNSCI. Histidine 99 is modified (tele-8alpha-FAD histidine). Histidine 466 serves as the catalytic Proton acceptor. FAD is bound by residues alanine 500 and 510–512; that span reads NPN.

It belongs to the GMC oxidoreductase family. As to quaternary structure, homodimer. It depends on FAD as a cofactor.

It catalyses the reaction choline + 2 O2 + H2O = glycine betaine + 2 H2O2 + H(+). It participates in amine and polyamine biosynthesis; betaine biosynthesis via choline pathway; betaine from choline: step 1/1. Its function is as follows. Catalyzes the two-step oxidative conversion of choline to glycine-betaine with betaine aldehyde as an intermediate. Glycine-betaine accumulates to high levels in the cytoplasm of cells to prevent dehydration and plasmolysis in adverse hyperosmotic environments. Accepts either choline or the reaction intermediate betaine-aldehyde as substrate. The sequence is that of Choline oxidase (codA) from Arthrobacter globiformis.